The primary structure comprises 149 residues: UPF0310 protein SSO2595 (149 aa).

It belongs to the UPF0310 family.

This chain is UPF0310 protein SSO2595, found in Saccharolobus solfataricus (strain ATCC 35092 / DSM 1617 / JCM 11322 / P2) (Sulfolobus solfataricus).